The primary structure comprises 154 residues: Myoglobin (154 aa).

The Globin domain maps to 2 to 148 (GLSEAEWQLV…FRKDIAAKYK (147 aa)). The residue at position 4 (Ser-4) is a Phosphoserine. Residue His-65 coordinates nitrite. Position 65 (His-65) interacts with O2. Position 68 is a phosphothreonine (Thr-68). His-94 provides a ligand contact to heme b.

It belongs to the globin family. As to quaternary structure, monomeric.

Its subcellular location is the cytoplasm. The protein resides in the sarcoplasm. It carries out the reaction Fe(III)-heme b-[protein] + nitric oxide + H2O = Fe(II)-heme b-[protein] + nitrite + 2 H(+). The catalysed reaction is H2O2 + AH2 = A + 2 H2O. Its function is as follows. Monomeric heme protein which primary function is to store oxygen and facilitate its diffusion within muscle tissues. Reversibly binds oxygen through a pentacoordinated heme iron and enables its timely and efficient release as needed during periods of heightened demand. Depending on the oxidative conditions of tissues and cells, and in addition to its ability to bind oxygen, it also has a nitrite reductase activity whereby it regulates the production of bioactive nitric oxide. Under stress conditions, like hypoxia and anoxia, it also protects cells against reactive oxygen species thanks to its pseudoperoxidase activity. The sequence is that of Myoglobin (MB) from Mesoplodon carlhubbsi (Hubb's beaked whale).